A 112-amino-acid chain; its full sequence is Large ribosomal subunit protein uL24 (112 aa).

This sequence belongs to the universal ribosomal protein uL24 family. As to quaternary structure, part of the 50S ribosomal subunit.

Functionally, one of two assembly initiator proteins, it binds directly to the 5'-end of the 23S rRNA, where it nucleates assembly of the 50S subunit. In terms of biological role, one of the proteins that surrounds the polypeptide exit tunnel on the outside of the subunit. In Magnetococcus marinus (strain ATCC BAA-1437 / JCM 17883 / MC-1), this protein is Large ribosomal subunit protein uL24.